Here is a 119-residue protein sequence, read N- to C-terminus: Immunoglobulin heavy variable 2-5 (119 aa).

The first 19 residues, 1–19 (MDTLCSTLLLLTIPSWVLS), serve as a signal peptide directing secretion. Gln20 is subject to Pyrrolidone carboxylic acid. Positions 20–44 (QITLKESGPTLVKPTQTLTLTCTFS) are framework-1. Residues 20 to 119 (QITLKESGPT…DTATYYCAHR (100 aa)) enclose the Ig-like domain. Cys41 and Cys116 are joined by a disulfide. A complementarity-determining-1 region spans residues 45–54 (GFSLSTSGVG). The segment at 55-71 (VGWIRQPPGKALEWLAL) is framework-2. The complementarity-determining-2 stretch occupies residues 72–78 (IYWDDDK). A framework-3 region spans residues 79–116 (RYSPSLKSRLTITKDTSKNQVVLTMTNMDPVDTATYYC). The segment at 117-119 (AHR) is complementarity-determining-3.

In terms of assembly, immunoglobulins are composed of two identical heavy chains and two identical light chains; disulfide-linked.

The protein localises to the secreted. Its subcellular location is the cell membrane. Its function is as follows. V region of the variable domain of immunoglobulin heavy chains that participates in the antigen recognition. Immunoglobulins, also known as antibodies, are membrane-bound or secreted glycoproteins produced by B lymphocytes. In the recognition phase of humoral immunity, the membrane-bound immunoglobulins serve as receptors which, upon binding of a specific antigen, trigger the clonal expansion and differentiation of B lymphocytes into immunoglobulins-secreting plasma cells. Secreted immunoglobulins mediate the effector phase of humoral immunity, which results in the elimination of bound antigens. The antigen binding site is formed by the variable domain of one heavy chain, together with that of its associated light chain. Thus, each immunoglobulin has two antigen binding sites with remarkable affinity for a particular antigen. The variable domains are assembled by a process called V-(D)-J rearrangement and can then be subjected to somatic hypermutations which, after exposure to antigen and selection, allow affinity maturation for a particular antigen. This is Immunoglobulin heavy variable 2-5 from Homo sapiens (Human).